The following is a 263-amino-acid chain: MKPTTISLLQKCKQEKKRFATITAYDYSFAKLFADEGINVMLVGDSLGMTIQGHDSTLPVTVEDIAYHTRAVRRGAPNCLLLSDLPFMAYATPEQACENAAIVMRAGANMVKIEGGAWLVDTVKMLTERAVPVCGHLGLTPQSVNIFGGYKIQGRGDAGQVLLDDALALEAAGAQLLVLECVPVELAKRVTEALSIPVIGIGAGNVTDGQILVMHDAFGITGGHIPKFAKNFLAEAGDMRAAVRQYMAEVESGVYPGEEHSFH.

2 residues coordinate Mg(2+): Asp45 and Asp84. Residues 45 to 46, Asp84, and Lys112 each bind 3-methyl-2-oxobutanoate; that span reads DS. Glu114 lines the Mg(2+) pocket. Glu180 serves as the catalytic Proton acceptor.

The protein belongs to the PanB family. In terms of assembly, homodecamer; pentamer of dimers. It depends on Mg(2+) as a cofactor.

The protein resides in the cytoplasm. The catalysed reaction is 3-methyl-2-oxobutanoate + (6R)-5,10-methylene-5,6,7,8-tetrahydrofolate + H2O = 2-dehydropantoate + (6S)-5,6,7,8-tetrahydrofolate. The protein operates within cofactor biosynthesis; (R)-pantothenate biosynthesis; (R)-pantoate from 3-methyl-2-oxobutanoate: step 1/2. Its function is as follows. Catalyzes the reversible reaction in which hydroxymethyl group from 5,10-methylenetetrahydrofolate is transferred onto alpha-ketoisovalerate to form ketopantoate. The chain is 3-methyl-2-oxobutanoate hydroxymethyltransferase from Salmonella paratyphi C (strain RKS4594).